A 240-amino-acid chain; its full sequence is Oxygen-insensitive NADPH nitroreductase (240 aa).

Residues 11–15, Ser-39, Gln-67, 128–131, and 167–169 each bind FMN; these read HRSIR, YIGG, and KPR.

The protein belongs to the flavin oxidoreductase frp family. Homodimer. FMN serves as cofactor.

Functionally, catalyzes the reduction of nitroaromatic compounds using NADPH. Has a broad electron acceptor specificity. Reduces nitrofurazone by a ping-pong bi-bi mechanism possibly to generate a two-electron transfer product. Major oxygen-insensitive nitroreductase in E.coli. The chain is Oxygen-insensitive NADPH nitroreductase (nfsA) from Escherichia coli (strain K12).